The sequence spans 603 residues: MSSNAQVRRRAVQAARGESPFDLLLVEAQIVDMATGEIRPADVGIVGEMIASVHPRGSRTDAHEVRSLAGGYLSPGLMDTHVHLESSHLPPERYAEIVLTQGTTAVFWDPHELANVLGVEGVRYAVDASRHLPLQVMVAAPSSVPSTPGLEMSGADFAGAEMETMLGWPEVRGVAEVMDMHGVLHGSERMQEIVQAGLNSGKLIEGHARGLSGADLQAYLAAGVTSDHELTSADDALEKLRAGLTIEIRGSHPYLLPDIVAALKTLPHLSSQITVCTDDVPPDMLLEKGGIIALLNLLIEHGLPAVDALRFATLNAAIRLQRHDLGLIAAGRRADLVVFDSLEKLVAREVYVGGERLAHAGRLLKPIAPAPGVTPPRDTLPIAPLRADDFVLRVQGIRHGVARLRHIRGARFTQWGEVEVQVRDGKVQLPAGFSLIWVKHRHGRHQATPQIALLEGWGELRGAIATSYSHDSHNLVVLGRDADDMALAANQLIASGGGMALAQQGEILAHVAMPIAGMLSDLPAAELARQFRELRDLSSQVADWEPPYRVFKAIEGTCLACNAGPHLTDLGLTDGGSRQIVDPLIACRETPEPTDHNNNPQGA.

This sequence belongs to the metallo-dependent hydrolases superfamily. Adenine deaminase family. In terms of assembly, homodimer. It depends on Mn(2+) as a cofactor.

The enzyme catalyses adenine + H2O + H(+) = hypoxanthine + NH4(+). This Klebsiella pneumoniae (strain 342) protein is Adenine deaminase.